The chain runs to 365 residues: uncharacterized protein (365 aa).

An ATP-binding site is contributed by 29–36 (GPLNSGKS).

The protein belongs to the archaeal ATPase family.

This is an uncharacterized protein from Methanocaldococcus jannaschii (strain ATCC 43067 / DSM 2661 / JAL-1 / JCM 10045 / NBRC 100440) (Methanococcus jannaschii).